The chain runs to 1028 residues: RNA cytidine acetyltransferase 1 (1028 aa).

Residues 286 to 295 (GRGKSAALGL) and arginine 460 contribute to the ATP site. The N-acetyltransferase domain occupies 548–731 (VLLGPVDESK…FAPFYISQIP (184 aa)). Residues 619-621 (IAV), 626-632 (MKMGYGS), and lysine 719 contribute to the acetyl-CoA site. The interval 989–1028 (ISIESTKTDNKKEKPSGFDKSAKKRGNDKHSSTSNKKRRA) is disordered. Over residues 994–1009 (TKTDNKKEKPSGFDKS) the composition is skewed to basic and acidic residues.

This sequence belongs to the RNA cytidine acetyltransferase family. NAT10 subfamily.

The protein localises to the nucleus. It localises to the nucleolus. It carries out the reaction a cytidine in 18S rRNA + acetyl-CoA + ATP + H2O = an N(4)-acetylcytidine in 18S rRNA + ADP + phosphate + CoA + H(+). The enzyme catalyses a cytidine in tRNA + acetyl-CoA + ATP + H2O = an N(4)-acetylcytidine in tRNA + ADP + phosphate + CoA + H(+). RNA cytidine acetyltransferase with specificity toward both 18S rRNA and tRNAs. Catalyzes the formation of N(4)-acetylcytidine (ac4C) in 18S rRNA. Required for early nucleolar cleavages of precursor rRNA at sites A0, A1 and A2 during 18S rRNA synthesis. Catalyzes the formation of ac4C in serine and leucine tRNAs. Requires a tRNA-binding adapter protein for full tRNA acetyltransferase activity but not for 18S rRNA acetylation. The chain is RNA cytidine acetyltransferase 1 from Arabidopsis thaliana (Mouse-ear cress).